Consider the following 734-residue polypeptide: Cullin-4 (734 aa).

A Cullin neddylation domain is found at Asp666–Asp728. Lys680 participates in a covalent cross-link: Glycyl lysine isopeptide (Lys-Gly) (interchain with G-Cter in NEDD8).

Belongs to the cullin family. Component of the Clr4 methyltransferase complex (ClrC) composed of at least clr4, rik1, pcu4, rbx1, raf1 and raf2. The cullin pcu4, rik1, raf1, raf2 and the ring-box protein rbx1 are components of an E3 ubiquitin ligase, whose activity is essential for heterochromatin assembly. Post-translationally, neddylated; enhancing the ubiquitin-ligase activity.

The protein localises to the cytoplasm. The protein resides in the nucleus. Its subcellular location is the chromosome. Its pathway is protein modification; protein ubiquitination. Its function is as follows. Required, indirectly, for activation of ribonucleotide reductase through the degradation of the protein spd1, thereby supplying deoxyribonucleotides for DNA replication and repair. Also has a role as a scaffold for assembling ubiquitin ligases. Component of the Clr4 methyltransferase complex (ClrC) which contributes to the establishment of heterochromatin by specifically methylating histone H3 to form H3K9me. ClrC preferentially ubiquitylates H3K14 and ClrC-mediated H3 ubiquitination promotes clr4 methyltransferase activity for the methylation of H3K9. H3K9me represents a specific tag for epigenetic transcriptional repression by recruiting swi6/HP1 to methylated histones which leads to transcriptional silencing within centromeric heterochromatin, telomeric regions and at the silent mating-type loci. This chain is Cullin-4 (pcu4), found in Schizosaccharomyces pombe (strain 972 / ATCC 24843) (Fission yeast).